The chain runs to 366 residues: G kinase-anchoring protein 1 (366 aa).

Positions 1 to 95 are interaction with IRS1; the sequence is MASAVLSSVL…SHSVCNVQHE (95 aa). The segment at 20 to 105 is disordered; it reads QVDSGSGSDS…LSLPNPVQKE (86 aa). Phosphoserine is present on residues serine 23, serine 25, and serine 27. The segment covering 39–50 has biased composition (polar residues); it reads NGKSQTLGNKST. The stretch at 46-77 forms a coiled coil; that stretch reads GNKSTANEKKREKRRKKKEQQQSEANELRNLA. The residue at position 106 (serine 106) is a Phosphoserine; by PKG. Coiled coils occupy residues 129 to 160, 250 to 299, and 326 to 353; these read DLEK…QTKV, LKDG…MLQE, and VSSL…YQGG.

It belongs to the GKAP1 family. In terms of assembly, interacts with PRKG1 and IRS1.

The protein localises to the golgi apparatus. In terms of biological role, regulates insulin-dependent IRS1 tyrosine phosphorylation in adipocytes by modulating the availability of IRS1 to IR tyrosine kinase. Its association with IRS1 is required for insulin-induced translocation of SLC2A4 to the cell membrane. Involved in TNF-induced impairment of insulin-dependent IRS1 tyrosine phosphorylation. This is G kinase-anchoring protein 1 (Gkap1) from Rattus norvegicus (Rat).